The following is a 325-amino-acid chain: MFTTVRPQSTLTPPTANLIPNDLFTAINELKKDLNAVILAHYYQDPDIQDIADFIGDSLALSQQAASTNAEVIVFAGVHFMAETAKILNPDKLVLLPDLNAGCSLADSCPPEAFAQFKAQYPGCLVVSYINCTAEIKAMSDIICTSSNAVKIVNQLPKDRPIIFAPDRNLGRYVMEQTRRELILWQGSCMVHETFSEKKIVQLKIEYPEAEIIAHPECEPSVLRHANYIGSTTALLNYSQQSASQIFIVATEPGIIHQMEKETPHKRFIPAPAINNCACNECPHMRLNTLEKLYLAMKFKQPEITMDETIRLAALRPIQRMLEMS.

Iminosuccinate contacts are provided by His-41 and Ser-58. Residue Cys-103 coordinates [4Fe-4S] cluster. Residues 129–131 and Ser-146 contribute to the iminosuccinate site; that span reads YIN. Cys-189 is a [4Fe-4S] cluster binding site. Residues 215–217 and Thr-232 each bind iminosuccinate; that span reads HPE. Cys-282 lines the [4Fe-4S] cluster pocket.

The protein belongs to the quinolinate synthase family. Type 2 subfamily. [4Fe-4S] cluster serves as cofactor.

Its subcellular location is the cytoplasm. It carries out the reaction iminosuccinate + dihydroxyacetone phosphate = quinolinate + phosphate + 2 H2O + H(+). It participates in cofactor biosynthesis; NAD(+) biosynthesis; quinolinate from iminoaspartate: step 1/1. Its function is as follows. Catalyzes the condensation of iminoaspartate with dihydroxyacetone phosphate to form quinolinate. The protein is Quinolinate synthase of Rippkaea orientalis (strain PCC 8801 / RF-1) (Cyanothece sp. (strain PCC 8801)).